The following is a 161-amino-acid chain: Allophycocyanin alpha chain (161 aa).

An N4-methylasparagine modification is found at Asn-71. Cys-81 is a binding site for (2R,3E)-phycocyanobilin.

The protein belongs to the phycobiliprotein family. Heterodimer of an alpha and a beta chain. Contains one covalently linked phycocyanobilin chromophore.

The protein resides in the cellular thylakoid membrane. Light-harvesting photosynthetic bile pigment-protein from the phycobiliprotein complex. Allophycocyanin has a maximum absorption at approximately 650 nanometers. This Synechocystis sp. (strain PCC 6714) (Aphanocapsa sp. (strain PCC 6714)) protein is Allophycocyanin alpha chain (apcA).